The sequence spans 456 residues: Exodeoxyribonuclease 7 large subunit (456 aa).

This sequence belongs to the XseA family. In terms of assembly, heterooligomer composed of large and small subunits.

The protein resides in the cytoplasm. The enzyme catalyses Exonucleolytic cleavage in either 5'- to 3'- or 3'- to 5'-direction to yield nucleoside 5'-phosphates.. In terms of biological role, bidirectionally degrades single-stranded DNA into large acid-insoluble oligonucleotides, which are then degraded further into small acid-soluble oligonucleotides. This chain is Exodeoxyribonuclease 7 large subunit, found in Erwinia tasmaniensis (strain DSM 17950 / CFBP 7177 / CIP 109463 / NCPPB 4357 / Et1/99).